The primary structure comprises 712 residues: MAKIVTRGDINNSLNLNNSNSNSNSNSSININNNNNSNNSNNNNLNNKNLKKCPICNKSLTNNDPNNLNGSILHSIECFVEISIALKLEFKKSISIAELNHIGKVNNIKPSQQNSPQNNSNSNNINININNNSNNGNSTSNSSDETVEGFKKRKRKDEFNTFDNQQTSNNSSNDNDDISPTTSPQLEQHQQYQQQQHQQQHHHHHHQQQQSSPIITRQQQKQLLLSPPPPLLQIETPSSPPLQQQQQPQPQQQPQPQQQQIPQAQQLRFIDSQRLKQQQQLQLEQQLFQQQQQQEQHQQQQLQQLHQQNQIEIQRYHQRQLQQQQQIQIEQQRQLLVQQQNQHQQKQIEYQKLQQQHLLLHQQQQQQQQQPQHQQNQQNQQNQQNQQNQQLLQHQQQQNQLAIIQKRLLQQQQQQQQQQQQQQQLIQQQQQQQQANHSKLLHLYQQLPQPFIHIFNSLTTEQKQVLHTRVLSHPPSDPMSPLQFVQTQLVQFNRQMDLRKSQQSQSVNTITQPQQQQQQQQQQQQQQQQQQQQQQQQQQQQQQQQQQQQQQQQQQQQYQQQVPQQQQQQQYQQQIQQQQEELVESELAISYRAAIFPYLFGTRCLGNRCPDSFKKYHIYIKNELIFSICPIQHDNNSFSNAKRVLYSALEYAGVIDNVIKSSSVVCNGCDERVGDLIRYEKRESSSGGREIQFYCSIDCFLNTNFYKKKQTK.

3 disordered regions span residues 1–46 (MAKI…NNLN), 107–264 (NIKP…IPQA), and 370–389 (QPQH…QQNQ). Composition is skewed to low complexity over residues 10-46 (INNS…NNLN), 107-143 (NIKP…SNSS), and 161-173 (TFDN…NSSN). The segment covering 178–187 (ISPTTSPQLE) has biased composition (polar residues). 2 stretches are compositionally biased toward low complexity: residues 188-198 (QHQQYQQQQHQ) and 241-264 (PLQQ…IPQA).

This is an uncharacterized protein from Dictyostelium discoideum (Social amoeba).